The primary structure comprises 352 residues: Probable dual-specificity RNA methyltransferase RlmN (352 aa).

The active-site Proton acceptor is Glu99. In terms of domain architecture, Radical SAM core spans 105 to 339; that stretch reads TKSRTTACVS…VTVRRSRGKD (235 aa). An intrachain disulfide couples Cys112 to Cys344. [4Fe-4S] cluster is bound by residues Cys119, Cys123, and Cys126. S-adenosyl-L-methionine-binding positions include 170 to 171, Ser202, 225 to 227, and Asn301; these read GE and SLH. Residue Cys344 is the S-methylcysteine intermediate of the active site.

This sequence belongs to the radical SAM superfamily. RlmN family. [4Fe-4S] cluster serves as cofactor.

It localises to the cytoplasm. It catalyses the reaction adenosine(2503) in 23S rRNA + 2 reduced [2Fe-2S]-[ferredoxin] + 2 S-adenosyl-L-methionine = 2-methyladenosine(2503) in 23S rRNA + 5'-deoxyadenosine + L-methionine + 2 oxidized [2Fe-2S]-[ferredoxin] + S-adenosyl-L-homocysteine. The catalysed reaction is adenosine(37) in tRNA + 2 reduced [2Fe-2S]-[ferredoxin] + 2 S-adenosyl-L-methionine = 2-methyladenosine(37) in tRNA + 5'-deoxyadenosine + L-methionine + 2 oxidized [2Fe-2S]-[ferredoxin] + S-adenosyl-L-homocysteine. Specifically methylates position 2 of adenine 2503 in 23S rRNA and position 2 of adenine 37 in tRNAs. The chain is Probable dual-specificity RNA methyltransferase RlmN from Christiangramia forsetii (strain DSM 17595 / CGMCC 1.15422 / KT0803) (Gramella forsetii).